Consider the following 211-residue polypeptide: Endonuclease III (211 aa).

A HhH domain is found at 108-127 (RAALEALPGVGRKTANVVLN). [4Fe-4S] cluster is bound by residues Cys187, Cys194, Cys197, and Cys203.

Belongs to the Nth/MutY family. [4Fe-4S] cluster serves as cofactor.

The enzyme catalyses 2'-deoxyribonucleotide-(2'-deoxyribose 5'-phosphate)-2'-deoxyribonucleotide-DNA = a 3'-end 2'-deoxyribonucleotide-(2,3-dehydro-2,3-deoxyribose 5'-phosphate)-DNA + a 5'-end 5'-phospho-2'-deoxyribonucleoside-DNA + H(+). In terms of biological role, DNA repair enzyme that has both DNA N-glycosylase activity and AP-lyase activity. The DNA N-glycosylase activity releases various damaged pyrimidines from DNA by cleaving the N-glycosidic bond, leaving an AP (apurinic/apyrimidinic) site. The AP-lyase activity cleaves the phosphodiester bond 3' to the AP site by a beta-elimination, leaving a 3'-terminal unsaturated sugar and a product with a terminal 5'-phosphate. The chain is Endonuclease III from Escherichia coli O6:H1 (strain CFT073 / ATCC 700928 / UPEC).